The following is a 66-amino-acid chain: MPGVYLEDSDNFEIALRRFKKQVEKAGVLSELKKRQHYEKPSVQRKKKKAAARKRLIKKMRKMSMG.

The protein belongs to the bacterial ribosomal protein bS21 family.

The sequence is that of Small ribosomal subunit protein bS21 from Maridesulfovibrio salexigens (strain ATCC 14822 / DSM 2638 / NCIMB 8403 / VKM B-1763) (Desulfovibrio salexigens).